The chain runs to 171 residues: MTAFRSGLIALLATLALDQASKLWLYFGTDLVMTQPWRLAPFADFVVVWNRGVSYGLFQQEGGLGRWLLVAVSLAAVIGLSVWMRRAGSRLLAVALGLIVGGALGNAIDRAAYGAVFDFVHLHAGPWSWYVFNVADAAIVAGVVGLILDSLRPAPRAPSTDVAGNGGHPQA.

3 helical membrane passes run 7-27 (GLIALLATLALDQASKLWLYF), 64-84 (LGRWLLVAVSLAAVIGLSVWM), and 88-108 (GSRLLAVALGLIVGGALGNAI). Catalysis depends on residues D118 and D136. Residues 128 to 148 (SWYVFNVADAAIVAGVVGLIL) form a helical membrane-spanning segment.

Belongs to the peptidase A8 family.

It localises to the cell inner membrane. The enzyme catalyses Release of signal peptides from bacterial membrane prolipoproteins. Hydrolyzes -Xaa-Yaa-Zaa-|-(S,diacylglyceryl)Cys-, in which Xaa is hydrophobic (preferably Leu), and Yaa (Ala or Ser) and Zaa (Gly or Ala) have small, neutral side chains.. The protein operates within protein modification; lipoprotein biosynthesis (signal peptide cleavage). Its function is as follows. This protein specifically catalyzes the removal of signal peptides from prolipoproteins. The protein is Lipoprotein signal peptidase of Methylorubrum extorquens (strain PA1) (Methylobacterium extorquens).